The following is a 207-amino-acid chain: Sodium/potassium-transporting ATPase subunit beta-1-interacting protein 1 (207 aa).

The signal sequence occupies residues 1 to 21; sequence MGKCSGRCTLVAFCCLQLVAA. Topologically, residues 22–34 are extracellular; it reads LERQIFDFLGYQW. Residues 35-55 form a helical membrane-spanning segment; sequence APILANFLHIMAVILGIFGTV. Over 56 to 61 the chain is Cytoplasmic; the sequence is QYRSRY. The chain crosses the membrane as a helical span at residues 62-82; sequence LILYAAWLVLWVGWNAFIICF. Topologically, residues 83 to 146 are extracellular; the sequence is YLEVGQLSQD…GCLLDYPYIE (64 aa). Asparagine 100 is a glycosylation site (N-linked (GlcNAc...) asparagine). Residues 147 to 167 traverse the membrane as a helical segment; the sequence is ALSSALQIFLALFGFVFACYV. Topologically, residues 168-207 are cytoplasmic; sequence SKVFLEEEDSFDFIGGFDSYGYQAPQKTSHLQLQPLYTSG.

Belongs to the NKAIN family. In terms of assembly, interacts with ATP1B1 C-terminus.

Its subcellular location is the cell membrane. The polypeptide is Sodium/potassium-transporting ATPase subunit beta-1-interacting protein 1 (NKAIN1) (Homo sapiens (Human)).